Reading from the N-terminus, the 356-residue chain is UDP-N-acetylglucosamine--N-acetylmuramyl-(pentapeptide) pyrophosphoryl-undecaprenol N-acetylglucosamine transferase (356 aa).

UDP-N-acetyl-alpha-D-glucosamine is bound by residues 12 to 14, R166, S196, and Q291; that span reads TAG.

Belongs to the glycosyltransferase 28 family. MurG subfamily.

It localises to the cell membrane. The enzyme catalyses di-trans,octa-cis-undecaprenyl diphospho-N-acetyl-alpha-D-muramoyl-L-alanyl-D-glutamyl-meso-2,6-diaminopimeloyl-D-alanyl-D-alanine + UDP-N-acetyl-alpha-D-glucosamine = di-trans,octa-cis-undecaprenyl diphospho-[N-acetyl-alpha-D-glucosaminyl-(1-&gt;4)]-N-acetyl-alpha-D-muramoyl-L-alanyl-D-glutamyl-meso-2,6-diaminopimeloyl-D-alanyl-D-alanine + UDP + H(+). It functions in the pathway cell wall biogenesis; peptidoglycan biosynthesis. Cell wall formation. Catalyzes the transfer of a GlcNAc subunit on undecaprenyl-pyrophosphoryl-MurNAc-pentapeptide (lipid intermediate I) to form undecaprenyl-pyrophosphoryl-MurNAc-(pentapeptide)GlcNAc (lipid intermediate II). This is UDP-N-acetylglucosamine--N-acetylmuramyl-(pentapeptide) pyrophosphoryl-undecaprenol N-acetylglucosamine transferase from Geobacillus thermodenitrificans (strain NG80-2).